A 472-amino-acid chain; its full sequence is Kynureninase 2 (472 aa).

Pyridoxal 5'-phosphate is bound by residues leucine 133, threonine 134, 162–165 (FPSD), aspartate 247, histidine 250, and tyrosine 272. Lysine 273 carries the N6-(pyridoxal phosphate)lysine modification. Pyridoxal 5'-phosphate is bound by residues tryptophan 314 and asparagine 342.

Belongs to the kynureninase family. As to quaternary structure, homodimer. Requires pyridoxal 5'-phosphate as cofactor.

Its subcellular location is the cytoplasm. It catalyses the reaction L-kynurenine + H2O = anthranilate + L-alanine + H(+). It carries out the reaction 3-hydroxy-L-kynurenine + H2O = 3-hydroxyanthranilate + L-alanine + H(+). Its pathway is amino-acid degradation; L-kynurenine degradation; L-alanine and anthranilate from L-kynurenine: step 1/1. It participates in cofactor biosynthesis; NAD(+) biosynthesis; quinolinate from L-kynurenine: step 2/3. Functionally, catalyzes the cleavage of L-kynurenine (L-Kyn) and L-3-hydroxykynurenine (L-3OHKyn) into anthranilic acid (AA) and 3-hydroxyanthranilic acid (3-OHAA), respectively. This Neurospora crassa (strain ATCC 24698 / 74-OR23-1A / CBS 708.71 / DSM 1257 / FGSC 987) protein is Kynureninase 2 (kyn-2).